A 74-amino-acid polypeptide reads, in one-letter code: DNA-directed RNA polymerase subunit omega (74 aa).

It belongs to the RNA polymerase subunit omega family. The RNAP catalytic core consists of 2 alpha, 1 beta, 1 beta' and 1 omega subunit. When a sigma factor is associated with the core the holoenzyme is formed, which can initiate transcription.

The catalysed reaction is RNA(n) + a ribonucleoside 5'-triphosphate = RNA(n+1) + diphosphate. Its function is as follows. Promotes RNA polymerase assembly. Latches the N- and C-terminal regions of the beta' subunit thereby facilitating its interaction with the beta and alpha subunits. This is DNA-directed RNA polymerase subunit omega from Helicobacter acinonychis (strain Sheeba).